The sequence spans 349 residues: Trans-enoyl reductase phmE (349 aa).

55 to 58 (CDWK) serves as a coordination point for NADP(+). 143-150 (TGIGTMGL) is a substrate binding site. NADP(+) contacts are provided by residues 182-185 (SPKN), Y200, and 247-248 (LE). 267-271 (GMAIL) is a binding site for substrate. 336 to 337 (VS) contacts NADP(+).

This sequence belongs to the zinc-containing alcohol dehydrogenase family. Monomer.

The protein operates within mycotoxin biosynthesis. In terms of biological role, trans-enoyl reductase; part of the gene cluster that mediates the biosynthesis of the mycotoxins phomacins, leucine-derived cytochalasans with potent actin polymerization-inhibitory activities and monocot-specific antigerminative activities. The first step in the pathway is catalyzed by the hybrid PKS-NRPS phmA, assisted by the enoyl reductase phmE, that are responsible for fusion of the leucine precursor and the polyketide backbone to produce a 2-pyrrolidone intermediate. The polyketide synthase module (PKS) of phmA is responsible for the synthesis of the polyketide backbone and the downstream nonribosomal peptide synthetase (NRPS) amidates the carboxyl end of the polyketide with the leucine precursor. Because phmA lacks a designated enoylreductase (ER) domain, the required activity is provided the enoyl reductase phmE. Reduction by the hydrolyase phmG, followed by dehydration and intra-molecular Diels-Alder cyclization by the Diels-Alderase phmD then yield the required isoindolone-fused macrocycle. A number of oxidative steps catalyzed by the tailoring cytochrome P450 monooxygenase phmB, the FAD-linked oxidoreductase phmC and the short-chain dehydrogenase/reductase phmF, are further required to afford the final products, phomacin D and phomacin E. This is Trans-enoyl reductase phmE from Phaeosphaeria nodorum (strain SN15 / ATCC MYA-4574 / FGSC 10173) (Glume blotch fungus).